The chain runs to 207 residues: MAAKETKELPPFEYPQGYHCIAGVDEVGRGPLVGDVVTAAVILDPNNPIEGLNDSKKLSEKKRLALLPEIQEKALAWAVGRCSPEEIDQLNILQATMVAMQRAVEGLAVKPDLVLIDGNRCPALPMDSQAVVKGDLRVAQISAASIIAKVVRDQEMEELDKQYPQFGFAQHKGYPTKAHFDAIEKHGVIEQHRKSFKPVKKALGIEE.

Residues 19 to 207 form the RNase H type-2 domain; it reads HCIAGVDEVG…PVKKALGIEE (189 aa). Residues Asp25, Glu26, and Asp117 each coordinate a divalent metal cation.

Belongs to the RNase HII family. Requires Mn(2+) as cofactor. It depends on Mg(2+) as a cofactor.

It localises to the cytoplasm. The catalysed reaction is Endonucleolytic cleavage to 5'-phosphomonoester.. Functionally, endonuclease that specifically degrades the RNA of RNA-DNA hybrids. The sequence is that of Ribonuclease HII from Vibrio vulnificus (strain CMCP6).